A 97-amino-acid polypeptide reads, in one-letter code: Large ribosomal subunit protein bL27 (97 aa).

Positions 1–12 (MLKMNLANLQLF) are excised as a propeptide. Residues 14–38 (HKKGGGSTSNGRDSESKRLGAKAAD) form a disordered region.

This sequence belongs to the bacterial ribosomal protein bL27 family. Post-translationally, the N-terminus is cleaved by ribosomal processing cysteine protease Prp.

This chain is Large ribosomal subunit protein bL27, found in Streptococcus mutans serotype c (strain ATCC 700610 / UA159).